A 550-amino-acid chain; its full sequence is Methionine--tRNA ligase (550 aa).

A 'HIGH' region motif is present at residues 13–23; it reads PYANGPLHFGH. Residues cysteine 145, cysteine 148, cysteine 158, and cysteine 161 each coordinate Zn(2+). The 'KMSKS' region signature appears at 331–335; the sequence is QFSKS. Lysine 334 lines the ATP pocket.

This sequence belongs to the class-I aminoacyl-tRNA synthetase family. MetG type 1 subfamily. As to quaternary structure, monomer. Zn(2+) is required as a cofactor.

It localises to the cytoplasm. It carries out the reaction tRNA(Met) + L-methionine + ATP = L-methionyl-tRNA(Met) + AMP + diphosphate. Is required not only for elongation of protein synthesis but also for the initiation of all mRNA translation through initiator tRNA(fMet) aminoacylation. The chain is Methionine--tRNA ligase from Chlamydia trachomatis serovar L2b (strain UCH-1/proctitis).